A 465-amino-acid chain; its full sequence is ATP synthase subunit beta (465 aa).

152–159 serves as a coordination point for ATP; it reads GGAGVGKT.

The protein belongs to the ATPase alpha/beta chains family. F-type ATPases have 2 components, CF(1) - the catalytic core - and CF(0) - the membrane proton channel. CF(1) has five subunits: alpha(3), beta(3), gamma(1), delta(1), epsilon(1). CF(0) has three main subunits: a(1), b(2) and c(9-12). The alpha and beta chains form an alternating ring which encloses part of the gamma chain. CF(1) is attached to CF(0) by a central stalk formed by the gamma and epsilon chains, while a peripheral stalk is formed by the delta and b chains.

It localises to the cell inner membrane. It catalyses the reaction ATP + H2O + 4 H(+)(in) = ADP + phosphate + 5 H(+)(out). Functionally, produces ATP from ADP in the presence of a proton gradient across the membrane. The catalytic sites are hosted primarily by the beta subunits. The protein is ATP synthase subunit beta of Campylobacter hominis (strain ATCC BAA-381 / DSM 21671 / CCUG 45161 / LMG 19568 / NCTC 13146 / CH001A).